The chain runs to 215 residues: uncharacterized protein (215 aa).

2 disordered regions span residues 1–144 and 156–215; these read MPKG…PYLR and IQGH…GAPA. Composition is skewed to low complexity over residues 16–29, 49–58, 85–96, and 104–127; these read ASTPSRSSWPASPT, SSSWPKSPIK, SGSSSPGPSSSR, and STAASSRSPATSARSTSSCPRAAP.

This is an uncharacterized protein from Homo sapiens (Human).